The following is a 211-amino-acid chain: Acyl-homoserine-lactone synthase (211 aa).

It belongs to the autoinducer synthase family.

The catalysed reaction is a fatty acyl-[ACP] + S-adenosyl-L-methionine = an N-acyl-L-homoserine lactone + S-methyl-5'-thioadenosine + holo-[ACP] + H(+). Functionally, required for the synthesis of OHHL (N-(3-oxohexanoyl)-L-homoserine lactone), an autoinducer molecule which binds to TraR and thus acts in the control of conjugal transfer. This Agrobacterium fabrum (strain C58 / ATCC 33970) (Agrobacterium tumefaciens (strain C58)) protein is Acyl-homoserine-lactone synthase (traI).